A 359-amino-acid polypeptide reads, in one-letter code: Heat-inducible transcription repressor HrcA (359 aa).

It belongs to the HrcA family.

Negative regulator of class I heat shock genes (grpE-dnaK-dnaJ and groELS operons). Prevents heat-shock induction of these operons. In Sinorhizobium fredii (strain NBRC 101917 / NGR234), this protein is Heat-inducible transcription repressor HrcA.